A 419-amino-acid polypeptide reads, in one-letter code: 1,4-beta-D-glucan cellobiohydrolase CEL6B (419 aa).

A signal peptide spans 1-47 (MGESFLLLQPASPALSPTPSSLLLGPTITMRADVLIAALATGALVAA). Substrate is bound by residues tryptophan 111 and serine 113. Residues aspartate 152 and aspartate 199 each act as proton donor in the active site. Tryptophan 247 contacts substrate. Residue asparagine 284 is glycosylated (N-linked (GlcNAc...) asparagine). Asparagine 287 serves as a coordination point for substrate. The N-linked (GlcNAc...) asparagine glycan is linked to asparagine 298. A substrate-binding site is contributed by tryptophan 347. A glycan (N-linked (GlcNAc...) asparagine) is linked at asparagine 364. Residues lysine 375 and glutamate 379 each coordinate substrate.

The protein belongs to the glycosyl hydrolase 6 (cellulase B) family. In terms of processing, both N- and O-glycosylated.

It is found in the secreted. The catalysed reaction is Hydrolysis of (1-&gt;4)-beta-D-glucosidic linkages in cellulose and cellotetraose, releasing cellobiose from the non-reducing ends of the chains.. Exoglucanase that plays an important function in biomass degradation by catalyzing the hydrolysis of the non-reducing end beta-1,4-glucosidic linkages in cellulose and cellotetraose to release cellobiose. Hydrolyzes crystalline and amorphous cellulose but is inactive on hydroxyethyl cellulose, mannan, galactomannan, xyloglucan, arabinoxylan, arabinan, xylan, and pectin. This Podospora anserina (strain S / ATCC MYA-4624 / DSM 980 / FGSC 10383) (Pleurage anserina) protein is 1,4-beta-D-glucan cellobiohydrolase CEL6B.